Consider the following 274-residue polypeptide: Pyrogallol hydroxytransferase small subunit (274 aa).

The [4Fe-4S] cluster site is built by C13, C16, C19, C23, C68, C71, C76, C109, C126, C129, C145, and C149.

In terms of assembly, heterodimer of a large and a small subunit. Requires [4Fe-4S] cluster as cofactor.

The catalysed reaction is 1,2,3,5-tetrahydroxybenzene + 1,2,3-trihydroxybenzene = 1,2,3,5-tetrahydroxybenzene + 1,3,5-trihydroxybenzene. Functionally, isomerization of pyrogallol to phloroglucin. The chain is Pyrogallol hydroxytransferase small subunit (bthL) from Pelobacter acidigallici.